The following is a 585-amino-acid chain: Arginine--tRNA ligase (585 aa).

A 'HIGH' region motif is present at residues 131–141; the sequence is ANPTGPMHVGH.

The protein belongs to the class-I aminoacyl-tRNA synthetase family. As to quaternary structure, monomer.

Its subcellular location is the cytoplasm. It catalyses the reaction tRNA(Arg) + L-arginine + ATP = L-arginyl-tRNA(Arg) + AMP + diphosphate. The polypeptide is Arginine--tRNA ligase (Brucella melitensis biotype 1 (strain ATCC 23456 / CCUG 17765 / NCTC 10094 / 16M)).